The following is a 552-amino-acid chain: Enhanced filamentous growth protein (552 aa).

Disordered regions lie at residues 17–48 (NNGM…SQQQ), 70–93 (QGQP…QQQQ), and 121–180 (QLSQ…QPTP). Residues 121 to 151 (QLSQPQPQHYNGSNRNYTSAPSGAPIPSNST) show a composition bias toward polar residues. Residues 204–310 (RVTTTMWEDE…RDIKRVIQTG (107 aa)) form the HTH APSES-type domain. Positions 238–259 (GTKLLNVAQMTRGRRDGILKSE) form a DNA-binding region, H-T-H motif. 3 disordered regions span residues 327–384 (TSAS…SPVN), 410–447 (QYGQ…QQQM), and 478–552 (SSYP…KEEK). Residues 340–381 (AAATTTAATAISKSSSGNGNSISATSGGSNVSGASGAGSTTS) are compositionally biased toward low complexity. Residues 419–434 (KNQNTPASQPGSTTND) show a composition bias toward polar residues. Composition is skewed to low complexity over residues 435–447 (QYLQ…QQQM) and 478–504 (SSYP…DQQQ). Positions 516 to 546 (SVHQSPQVQSLTQGSVHPSPQQHQANQSAST) are enriched in polar residues.

The protein belongs to the EFG1/PHD1/stuA family.

The protein localises to the nucleus. Putative transcription factor that stimulates pseudohyphal morphogenesis. In Candida albicans (Yeast), this protein is Enhanced filamentous growth protein (EFG1).